The following is a 102-amino-acid chain: Small ribosomal subunit protein uS10 (102 aa).

Belongs to the universal ribosomal protein uS10 family. In terms of assembly, part of the 30S ribosomal subunit.

Involved in the binding of tRNA to the ribosomes. The polypeptide is Small ribosomal subunit protein uS10 (Clostridium acetobutylicum (strain ATCC 824 / DSM 792 / JCM 1419 / IAM 19013 / LMG 5710 / NBRC 13948 / NRRL B-527 / VKM B-1787 / 2291 / W)).